The chain runs to 610 residues: T-cell immunomodulatory protein (610 aa).

The signal sequence occupies residues 1–32 (MAAGRLPSARAVLAPLFLGLALLSVGPAPARA). N-linked (GlcNAc...) asparagine glycosylation is found at Asn35, Asn123, Asn138, Asn145, Asn150, Asn175, and Asn241. One copy of the FG-GAP 1; atypical repeat lies at 98–135 (LVTSVVPGDYDGDSQMDVLLTYFPQNHTNSELGAVIFW). The stretch at 153–183 (FHDQPLIMDFNGDLIPDVFGITNESSQPQIL) is one FG-GAP 2; atypical repeat. The FG-GAP 3; atypical repeat unit spans residues 256–291 (VVGQSAFADFDGDGHMDHLLPGCEDKDCQKSAIYLM). N-linked (GlcNAc...) asparagine glycosylation is found at Asn351, Asn369, and Asn480. The helical transmembrane segment at 565 to 585 (VLLTAVALIGVCIFILAIIAI) threads the bilayer.

It belongs to the TIP family. As to quaternary structure, interacts with RUVBL1, RUVBL2 and alpha-tubulin.

Its subcellular location is the secreted. The protein localises to the membrane. Modulator of T-cell function. Has a protective effect in graft versus host disease model. The polypeptide is T-cell immunomodulatory protein (Mus musculus (Mouse)).